Here is a 207-residue protein sequence, read N- to C-terminus: V-type ATP synthase subunit D (207 aa).

The protein belongs to the V-ATPase D subunit family.

Its function is as follows. Produces ATP from ADP in the presence of a proton gradient across the membrane. This chain is V-type ATP synthase subunit D, found in Streptococcus gordonii (strain Challis / ATCC 35105 / BCRC 15272 / CH1 / DL1 / V288).